We begin with the raw amino-acid sequence, 74 residues long: Tetrahydromethanopterin S-methyltransferase subunit G (74 aa).

Residues Ile50 to Gly70 traverse the membrane as a helical segment.

It belongs to the MtrG family. As to quaternary structure, the complex is composed of 8 subunits; MtrA, MtrB, MtrC, MtrD, MtrE, MtrF, MtrG and MtrH.

It is found in the cell membrane. It catalyses the reaction 5-methyl-5,6,7,8-tetrahydromethanopterin + coenzyme M + 2 Na(+)(in) = 5,6,7,8-tetrahydromethanopterin + methyl-coenzyme M + 2 Na(+)(out). It participates in one-carbon metabolism; methanogenesis from CO(2); methyl-coenzyme M from 5,10-methylene-5,6,7,8-tetrahydromethanopterin: step 2/2. Part of a complex that catalyzes the formation of methyl-coenzyme M and tetrahydromethanopterin from coenzyme M and methyl-tetrahydromethanopterin. This is an energy-conserving, sodium-ion translocating step. The polypeptide is Tetrahydromethanopterin S-methyltransferase subunit G (Methanopyrus kandleri (strain AV19 / DSM 6324 / JCM 9639 / NBRC 100938)).